A 790-amino-acid polypeptide reads, in one-letter code: Pre-mRNA-splicing factor cwf3 (790 aa).

17 HAT repeats span residues 12–44 (DLINVDDEPFELELLRDPYSLKSWLRYIKTHEG), 45–77 (STLEKRVLLFERACSELPGSYKIWKSYLELRVA), 89–121 (EAFASVNDCFERSLILLHKMPVIWKLYLQFLMK), 123–157 (PNVTKIRCTFNSALRALPVTQHDDIWDMFTKYAED), 159–190 (GGLFCIHVYRRYIQVEPRAIENYIEILCKLGL), 193–228 (EAARQYEDILNRPVFLSAKRKSNYQIWLEFSELVVQ), 233–266 (TQNIDVEKVFRAGIKRFSDQAGKLWTYLAQYYIR), 268–303 (GDYEKARSTFYEGMNNIMTVRNFTIIFDAFVEFEEQ), 331–364 (KILDKRPLYINDVLLRQNINNVDEWLRRVKFLED), 368–402 (KVVQVYTDAIKNVNPKLAHGSLGKLFSEFARFYEN), 404–440 (DDLEQSRIIFEKATHVPYKTVNELAQVWIDWAEMELR), 457–492 (APRKSHISFFDESLSPQVRLHKSSKIWMYYLDLEES), 494–526 (GTIETTRKLYDRVFELKIATPQVVVNYANLLEE), 528–562 (AYFEDSFKIYERGVALFSYPVAFELWNLYLTKFVK), 567–601 (THMERTRDLFEQALEGCPPEFSKSIYLLYADFEEK), 639–673 (YGVLATRTVYEKAIESLSDSEVKDMCLRFAEMETK), and 675–709 (GEIDRARLIYIHGSQYCDPRVETDYWKAWQEFEIR). The disordered stretch occupies residues 769–790 (LAGFVLSKSNPQETSKITGEEN). Polar residues predominate over residues 775 to 790 (SKSNPQETSKITGEEN).

The protein belongs to the crooked-neck family. As to quaternary structure, belongs to the 40S cdc5-associated complex (or cwf complex), a spliceosome sub-complex reminiscent of a late-stage spliceosome composed of the U2, U5 and U6 snRNAs and at least brr2, cdc5, cwf2/prp3, cwf3/syf1, cwf4/syf3, cwf5/ecm2, spp42/cwf6, cwf7/spf27, cwf8, cwf9, cwf10, cwf11, cwf12, prp45/cwf13, cwf14, cwf15, cwf16, cwf17, cwf18, cwf19, cwf20, cwf21, cwf22, cwf23, cwf24, cwf25, cwf26, cyp7/cwf27, cwf28, cwf29/ist3, lea1, msl1, prp5/cwf1, prp10, prp12/sap130, prp17, prp22, sap61, sap62, sap114, sap145, slu7, smb1, smd1, smd3, smf1, smg1 and syf2.

The protein resides in the nucleus. Functionally, involved in pre-mRNA splicing and cell cycle progression. The polypeptide is Pre-mRNA-splicing factor cwf3 (cwf3) (Schizosaccharomyces pombe (strain 972 / ATCC 24843) (Fission yeast)).